A 311-amino-acid chain; its full sequence is Nod factor export ATP-binding protein I (311 aa).

Residues 13-243 (IDLAGVSKSY…QIGCPVIEIY (231 aa)) form the ABC transporter domain. Residue 45-52 (GPNGAGKS) coordinates ATP.

Belongs to the ABC transporter superfamily. Lipooligosaccharide exporter (TC 3.A.1.102) family. In terms of assembly, the complex is composed of two ATP-binding proteins (NodI) and two transmembrane proteins (NodJ).

It is found in the cell inner membrane. In terms of biological role, part of the ABC transporter complex NodIJ involved in the export of the nodulation factors (Nod factors), the bacterial signal molecules that induce symbiosis and subsequent nodulation induction. Nod factors are LCO (lipo-chitin oligosaccharide), a modified beta-1,4-linked N-acetylglucosamine oligosaccharide. This subunit is responsible for energy coupling to the transport system. This is Nod factor export ATP-binding protein I from Rhizobium leguminosarum bv. viciae.